Consider the following 544-residue polypeptide: Lariat debranching enzyme (544 aa).

A divalent metal cation-binding residues include Cys-8, His-10, Asp-39, and Asn-84. The segment at 124–154 is lariat recognition loop; it reads SGIFKSHDYRKGHFECPPYNSSTIRSIYHVR. Residue Lys-128 is modified to N6-acetyllysine. A divalent metal cation is bound by residues His-174, His-226, and His-228. The segment covering 395 to 412 has biased composition (acidic residues); that stretch reads EYEEQDDVESNDSGEDQS. The segment at 395 to 463 is disordered; the sequence is EYEEQDDVES…PSDQASEFSA (69 aa). Residues 413-425 show a composition bias toward polar residues; it reads EYNTDTSALSSIN. The span at 429–439 shows a compositional bias: acidic residues; that stretch reads IMLDEEEDEDS. Residues 445–463 show a composition bias toward polar residues; it reads SGMNTPSVEPSDQASEFSA. Residues Ser-464, Ser-474, Ser-478, Ser-479, Ser-485, Ser-499, and Ser-514 each carry the phosphoserine modification. Positions 476 to 544 are disordered; the sequence is IVSSDDTVDS…AVDDDDDDAA (69 aa). Basic and acidic residues predominate over residues 512–522; the sequence is RLSDEHEPEQR.

It belongs to the lariat debranching enzyme family. The cofactor is Fe(2+). Zn(2+) serves as cofactor. Mn(2+) is required as a cofactor. Ubiquitously expressed, strongest expression in the spinal cord and brainstem.

The protein localises to the nucleus. Active in presence of diverse metals including Fe(2+), Zn(2+), Mn(2+). Also activated by Ca(2+). Binds two metal cations in two adjacent alpha and beta metal-binding pockets. In terms of biological role, cleaves the 2'-5' phosphodiester linkage at the branch point of excised lariat intron RNA and converts them into linear molecules that can be subsequently degraded, thereby facilitating ribonucleotide turnover. Linked to its role in pre-mRNA processing mechanism, may also participate in retrovirus replication via an RNA lariat intermediate in cDNA synthesis and have an antiviral cell-intrinsic defense function in the brainstem. The protein is Lariat debranching enzyme (DBR1) of Homo sapiens (Human).